The sequence spans 316 residues: Glycine--tRNA ligase alpha subunit (316 aa).

This sequence belongs to the class-II aminoacyl-tRNA synthetase family. In terms of assembly, tetramer of two alpha and two beta subunits.

Its subcellular location is the cytoplasm. The enzyme catalyses tRNA(Gly) + glycine + ATP = glycyl-tRNA(Gly) + AMP + diphosphate. The protein is Glycine--tRNA ligase alpha subunit of Cupriavidus taiwanensis (strain DSM 17343 / BCRC 17206 / CCUG 44338 / CIP 107171 / LMG 19424 / R1) (Ralstonia taiwanensis (strain LMG 19424)).